The chain runs to 189 residues: Calcium and integrin-binding family member 2 (189 aa).

3 EF-hand domains span residues 68–103 (RENP…FSEQ), 105–140 (PRDI…MTKN), and 146–181 (EHQQ…APDF). The Ca(2+) site is built by Asp118, Asp120, Asp122, Asp129, Asp159, Asp161, Asp163, Lys165, and Glu170.

As to quaternary structure, monomer. Homodimer.

The protein localises to the cytoplasm. Functionally, calcium- and integrin-binding protein. Plays a role in intracellular calcium homeostasis. Critical for proper photoreceptor cell maintenance and function. Required for prevention of light-dependent retinal degeneration. This chain is Calcium and integrin-binding family member 2, found in Drosophila melanogaster (Fruit fly).